The primary structure comprises 189 residues: Elongation factor P (189 aa).

The protein belongs to the elongation factor P family.

It localises to the cytoplasm. The protein operates within protein biosynthesis; polypeptide chain elongation. Its function is as follows. Involved in peptide bond synthesis. Stimulates efficient translation and peptide-bond synthesis on native or reconstituted 70S ribosomes in vitro. Probably functions indirectly by altering the affinity of the ribosome for aminoacyl-tRNA, thus increasing their reactivity as acceptors for peptidyl transferase. In Rhizobium etli (strain ATCC 51251 / DSM 11541 / JCM 21823 / NBRC 15573 / CFN 42), this protein is Elongation factor P.